The following is a 103-amino-acid chain: uncharacterized protein (103 aa).

This is an uncharacterized protein from Dictyostelium discoideum (Social amoeba).